We begin with the raw amino-acid sequence, 201 residues long: Ras-related protein Rab-1B (201 aa).

Met1 bears the N-acetylmethionine mark. GTP contacts are provided by Ser17, Gly18, Val19, Gly20, Lys21, Ser22, Cys23, Tyr33, Thr34, Glu35, Ser36, Ser39, and Thr40. Mg(2+) is bound at residue Ser22. The Switch 1 motif lies at 30–45; it reads DDTYTESYISTIGVDF. The Mg(2+) site is built by Thr40 and Asp63. A switch 2 region; required for interaction with REP1/CHM region spans residues 64-83; sequence TAGQERGRTITSSYYRGAHG. Positions 65–80 match the Switch 2 motif; sequence AGQERGRTITSSYYRG. GTP contacts are provided by Gly66, Asn121, Lys122, Asp124, Ser151, Ala152, and Lys153. Positions 173–201 are disordered; it reads MGPGAASGGERPNLKIDSTPVKQAGGGCC. S-geranylgeranyl cysteine attachment occurs at residues Cys200 and Cys201. Cys201 is subject to Cysteine methyl ester.

This sequence belongs to the small GTPase superfamily. Rab family. In terms of assembly, interacts with MICAL1 and MICAL2. Interacts (in GTP-bound form) with MICALCL, MICAL1 and MILCAL3. Interacts with GDI1; the interaction requires the GDP-bound state. Interacts with CHM/REP1; the interaction requires the GDP-bound form and is necessary for prenylation by GGTase II. Interacts with RabGAP TBC1D20. Interacts (in GDP-bound form) with lipid phosphatase MTMR6 (via GRAM domain); the interaction regulates MTMR6 recruitment to the endoplasmic reticulum-Golgi intermediate compartment. Interacts (in GDP-bound form) with lipid phosphatase MTMR7. Mg(2+) serves as cofactor. In terms of processing, prenylated; by GGTase II, only after interaction of the substrate with Rab escort protein 1 (REP1).

The protein resides in the cytoplasm. Its subcellular location is the membrane. It localises to the preautophagosomal structure membrane. The protein localises to the perinuclear region. The catalysed reaction is GTP + H2O = GDP + phosphate + H(+). Regulated by guanine nucleotide exchange factors (GEFs) which promote the exchange of bound GDP for free GTP. Regulated by GTPase activating proteins (GAPs) including TBC1D20 which increases the GTP hydrolysis activity. Inhibited by GDP dissociation inhibitors (GDIs). Its function is as follows. The small GTPases Rab are key regulators of intracellular membrane trafficking, from the formation of transport vesicles to their fusion with membranes. Rabs cycle between an inactive GDP-bound form and an active GTP-bound form that is able to recruit to membranes different set of downstream effectors directly responsible for vesicle formation, movement, tethering and fusion. Plays a role in the initial events of the autophagic vacuole development which take place at specialized regions of the endoplasmic reticulum. Regulates vesicular transport between the endoplasmic reticulum and successive Golgi compartments. Required to modulate the compacted morphology of the Golgi. Promotes the recruitment of lipid phosphatase MTMR6 to the endoplasmic reticulum-Golgi intermediate compartment. This is Ras-related protein Rab-1B (RAB1B) from Sus scrofa (Pig).